The following is a 459-amino-acid chain: Probable Delta(5) fatty acid desaturase C (459 aa).

Positions 9–87 constitute a Cytochrome b5 heme-binding domain; it reads KKLYSWKEIS…LKQYEIGQVS (79 aa). Residues His-45 and His-68 each coordinate heme. 2 helical membrane passes run 121–141 and 151–171; these read FAFG…TSYY and FYLN…FSLH. Positions 174–178 match the Histidine box-1 motif; that stretch reads HDACH. Residues 187-207 form a helical membrane-spanning segment; sequence VWKWLGATYDLFIGASFFYWC. The short motif at 210–215 is the Histidine box-2 element; it reads HVIGHH. 2 consecutive transmembrane segments (helical) span residues 289-309 and 315-335; these read FEII…FIIP and LVNL…YLSF. The short motif at 394 to 398 is the Histidine box-3 element; it reads QVVHH.

The protein belongs to the fatty acid desaturase type 1 family. Requires Fe cation as cofactor.

Its subcellular location is the membrane. In Dictyostelium discoideum (Social amoeba), this protein is Probable Delta(5) fatty acid desaturase C.